The primary structure comprises 115 residues: uncharacterized protein (115 aa).

2 consecutive transmembrane segments (helical) span residues 15-35 and 52-72; these read FSTQ…EVLF and FDGV…YYSI.

The protein resides in the membrane. This is an uncharacterized protein from Saccharomyces cerevisiae (strain ATCC 204508 / S288c) (Baker's yeast).